The chain runs to 258 residues: Acetylglutamate kinase (258 aa).

Substrate contacts are provided by residues 44–45 (GG), arginine 66, and asparagine 158. Residues 181-186 (DVSGIL) and 209-211 (IIT) each bind ATP.

Belongs to the acetylglutamate kinase family. ArgB subfamily. Homodimer.

The protein resides in the cytoplasm. It carries out the reaction N-acetyl-L-glutamate + ATP = N-acetyl-L-glutamyl 5-phosphate + ADP. It functions in the pathway amino-acid biosynthesis; L-arginine biosynthesis; N(2)-acetyl-L-ornithine from L-glutamate: step 2/4. Catalyzes the ATP-dependent phosphorylation of N-acetyl-L-glutamate. In Salmonella paratyphi A (strain ATCC 9150 / SARB42), this protein is Acetylglutamate kinase.